The chain runs to 130 residues: Small ribosomal subunit protein uS8 (130 aa).

The protein belongs to the universal ribosomal protein uS8 family. Part of the 30S ribosomal subunit.

Functionally, one of the primary rRNA binding proteins, it binds directly to 16S rRNA central domain where it helps coordinate assembly of the platform of the 30S subunit. The sequence is that of Small ribosomal subunit protein uS8 from Methanococcus maripaludis (strain C6 / ATCC BAA-1332).